Consider the following 122-residue polypeptide: Small ribosomal subunit protein uS13 (122 aa).

The segment at 97–122 is disordered; that stretch reads PCRGQRTKTNARTRKGPARTVAGKKK.

It belongs to the universal ribosomal protein uS13 family. As to quaternary structure, part of the 30S ribosomal subunit. Forms a loose heterodimer with protein S19. Forms two bridges to the 50S subunit in the 70S ribosome.

Its function is as follows. Located at the top of the head of the 30S subunit, it contacts several helices of the 16S rRNA. In the 70S ribosome it contacts the 23S rRNA (bridge B1a) and protein L5 of the 50S subunit (bridge B1b), connecting the 2 subunits; these bridges are implicated in subunit movement. Contacts the tRNAs in the A and P-sites. The polypeptide is Small ribosomal subunit protein uS13 (Geobacter sp. (strain M21)).